The chain runs to 322 residues: Ferredoxin--NADP reductase (322 aa).

The FAD site is built by aspartate 34, glutamine 42, tyrosine 47, valine 87, phenylalanine 120, aspartate 279, and threonine 320.

The protein belongs to the ferredoxin--NADP reductase type 2 family. As to quaternary structure, homodimer. FAD serves as cofactor.

It carries out the reaction 2 reduced [2Fe-2S]-[ferredoxin] + NADP(+) + H(+) = 2 oxidized [2Fe-2S]-[ferredoxin] + NADPH. The polypeptide is Ferredoxin--NADP reductase (Streptococcus pneumoniae serotype 19F (strain G54)).